The sequence spans 501 residues: GTPase Obg (501 aa).

The Obg domain maps to 2-159; it reads NRFIDRVVLH…HDLILELKSM (158 aa). In terms of domain architecture, OBG-type G spans 160–341; that stretch reads ADVGLVGFPS…LKYKLLEIVQ (182 aa). Residues 166 to 173, 191 to 195, 212 to 215, 292 to 295, and 322 to 324 each bind GTP; these read GFPSAGKS, FTTLQ, DVPG, NKAD, and SAV. Residues Ser-173 and Thr-193 each coordinate Mg(2+). The OCT domain maps to 362–442; it reads VDHRTKGQFQ…IGGISFEWEP (81 aa).

The protein belongs to the TRAFAC class OBG-HflX-like GTPase superfamily. OBG GTPase family. Monomer. It depends on Mg(2+) as a cofactor.

Its subcellular location is the cytoplasm. In terms of biological role, an essential GTPase which binds GTP, GDP and possibly (p)ppGpp with moderate affinity, with high nucleotide exchange rates and a fairly low GTP hydrolysis rate. Plays a role in control of the cell cycle, stress response, ribosome biogenesis and in those bacteria that undergo differentiation, in morphogenesis control. The polypeptide is GTPase Obg (Corynebacterium glutamicum (strain R)).